The chain runs to 303 residues: UDP-N-acetylenolpyruvoylglucosamine reductase (303 aa).

Positions 28–195 (KTGGPAQYLA…ISATFGLEPG (168 aa)) constitute an FAD-binding PCMH-type domain. Arg-174 is a catalytic residue. The Proton donor role is filled by Ser-224. Residue Glu-294 is part of the active site.

It belongs to the MurB family. FAD serves as cofactor.

It is found in the cytoplasm. It catalyses the reaction UDP-N-acetyl-alpha-D-muramate + NADP(+) = UDP-N-acetyl-3-O-(1-carboxyvinyl)-alpha-D-glucosamine + NADPH + H(+). It participates in cell wall biogenesis; peptidoglycan biosynthesis. Cell wall formation. In Lactobacillus gasseri (strain ATCC 33323 / DSM 20243 / BCRC 14619 / CIP 102991 / JCM 1131 / KCTC 3163 / NCIMB 11718 / NCTC 13722 / AM63), this protein is UDP-N-acetylenolpyruvoylglucosamine reductase.